The sequence spans 581 residues: Proline--tRNA ligase (581 aa).

This sequence belongs to the class-II aminoacyl-tRNA synthetase family. ProS type 1 subfamily. Homodimer.

It is found in the cytoplasm. The enzyme catalyses tRNA(Pro) + L-proline + ATP = L-prolyl-tRNA(Pro) + AMP + diphosphate. Its function is as follows. Catalyzes the attachment of proline to tRNA(Pro) in a two-step reaction: proline is first activated by ATP to form Pro-AMP and then transferred to the acceptor end of tRNA(Pro). As ProRS can inadvertently accommodate and process non-cognate amino acids such as alanine and cysteine, to avoid such errors it has two additional distinct editing activities against alanine. One activity is designated as 'pretransfer' editing and involves the tRNA(Pro)-independent hydrolysis of activated Ala-AMP. The other activity is designated 'posttransfer' editing and involves deacylation of mischarged Ala-tRNA(Pro). The misacylated Cys-tRNA(Pro) is not edited by ProRS. In Blochmanniella floridana, this protein is Proline--tRNA ligase.